The following is a 316-amino-acid chain: Leucine-rich repeat-containing protein 73 (316 aa).

LRR repeat units follow at residues 57 to 78 (SLAQLNLNLGVVSSPSRIKQLA), 86 to 106 (SIQSLFLHGSPLTDAGLALLN), 114 to 137 (ALVALDLGDCMLGDEAINLICGLL), 145 to 166 (GLKELTLSANPGITPKGWSRLA), 174 to 187 (QVRVLNLDYNPLGD), 202 to 223 (TLEVLDLEGTGLTNQSAQTLLD), and 231 to 250 (ALRSLVLAENSISPELQQQI). The tract at residues 257–296 (GEEEEEMAGGAADTQEWGRGREPAAHQRGGSSWKCPSDPN) is disordered. The span at 272–281 (EWGRGREPAA) shows a compositional bias: basic and acidic residues.

The chain is Leucine-rich repeat-containing protein 73 (Lrrc73) from Rattus norvegicus (Rat).